Here is a 236-residue protein sequence, read N- to C-terminus: UPF0502 protein BamMC406_5439 (236 aa).

The protein belongs to the UPF0502 family.

This chain is UPF0502 protein BamMC406_5439, found in Burkholderia ambifaria (strain MC40-6).